A 239-amino-acid chain; its full sequence is Type III pantothenate kinase (239 aa).

ATP is bound at residue 6 to 13 (DAGNTRLK). Residues tyrosine 87 and 94-97 (GADR) each bind substrate. The active-site Proton acceptor is aspartate 96. Threonine 119 provides a ligand contact to ATP. A substrate-binding site is contributed by serine 169.

Belongs to the type III pantothenate kinase family. As to quaternary structure, homodimer. Requires NH4(+) as cofactor. It depends on K(+) as a cofactor.

The protein resides in the cytoplasm. The enzyme catalyses (R)-pantothenate + ATP = (R)-4'-phosphopantothenate + ADP + H(+). Its pathway is cofactor biosynthesis; coenzyme A biosynthesis; CoA from (R)-pantothenate: step 1/5. Catalyzes the phosphorylation of pantothenate (Pan), the first step in CoA biosynthesis. This is Type III pantothenate kinase from Laribacter hongkongensis (strain HLHK9).